Here is a 282-residue protein sequence, read N- to C-terminus: MEFSCTLTLKELLESGAHFGHQTSRWNPRMKPFIFEEKNGLYIIDLAKTLAQLKKAVACIQTTIGQEKSILFVGTKKQAKQIIREAAIECGEFFASERWLGGMLTNMATIRNSVKTLNRIELDLEASNSGLTKKELALLAKRHRKLLNNLEGVRHMNSLPGLLIVIDPGYERIAVAEAGKLGIPVMALVDTNCDPTPINHVIPCNDDSMKSIRLIVNVLKDAVIDAKKRLGVEILSPVRPAERPAEEAVEELPLPTGEAQDEASSKEGVLLWADIDNCEALK.

Positions 245–266 (AEEAVEELPLPTGEAQDEASSK) are disordered.

The protein belongs to the universal ribosomal protein uS2 family.

This chain is Small ribosomal subunit protein uS2 (rpsB), found in Chlamydia trachomatis serovar D (strain ATCC VR-885 / DSM 19411 / UW-3/Cx).